The chain runs to 100 residues: Urease subunit gamma (100 aa).

It belongs to the urease gamma subunit family. As to quaternary structure, heterotrimer of UreA (gamma), UreB (beta) and UreC (alpha) subunits. Three heterotrimers associate to form the active enzyme.

The protein localises to the cytoplasm. The catalysed reaction is urea + 2 H2O + H(+) = hydrogencarbonate + 2 NH4(+). It functions in the pathway nitrogen metabolism; urea degradation; CO(2) and NH(3) from urea (urease route): step 1/1. This chain is Urease subunit gamma, found in Corynebacterium efficiens (strain DSM 44549 / YS-314 / AJ 12310 / JCM 11189 / NBRC 100395).